Reading from the N-terminus, the 39-residue chain is uncharacterized protein (39 aa).

Positions 1 to 16 are enriched in polar residues; it reads MLNIQPTQSIVNNQPK. The segment at 1-39 is disordered; the sequence is MLNIQPTQSIVNNQPKSDQKKQKPADLLKEFYDKTGNRN. Positions 17–39 are enriched in basic and acidic residues; that stretch reads SDQKKQKPADLLKEFYDKTGNRN.

This is an uncharacterized protein from Dictyostelium discoideum (Social amoeba).